A 733-amino-acid chain; its full sequence is FYVE, RhoGEF and PH domain-containing protein 3 (733 aa).

Composition is skewed to polar residues over residues 1–11 (MELGRSSSTPQ), 47–60 (HSSS…STRE), and 106–117 (ETASDSRVPQDN). Positions 1-134 (MELGRSSSTP…GVGEEPDPKV (134 aa)) are disordered. Residues 118-129 (PQEEEDSGVGEE) are compositionally biased toward acidic residues. S124 is modified (phosphoserine). The region spanning 153 to 337 (KLLHIAQELL…STAADHSNAA (185 aa)) is the DH domain. One can recognise a PH 1 domain in the interval 366-465 (ELIKEGSIQK…WIQVIQATVE (100 aa)). The segment at 481 to 535 (CSQDEEPTLSPDQPVMSTSSVEPAGVADSNGGTPGIESRKSSSKTRRDKEKPGCK) is disordered. Residues 517-533 (ESRKSSSKTRRDKEKPG) show a composition bias toward basic and acidic residues. The segment at 528 to 584 (DKEKPGCKSCGETFNSITKRRYRCKLCGEVICRKCSEFKAENSKQSRVCRECFLEEP) adopts an FYVE-type zinc-finger fold. Zn(2+) contacts are provided by C534, C537, C551, C554, C559, C562, C576, and C579. Disordered stretches follow at residues 586-612 (VPPS…DPRP) and 712-733 (GDTA…TDTP). The PH 2 domain occupies 612 to 711 (PSLLCGTLNL…WLKALGTAVH (100 aa)). T732 bears the Phosphothreonine mark.

Detected in adult brain, spleen, lung and skeletal muscle. Detected in embryos from 7 dpc to 17 dpc.

Its subcellular location is the cytoplasm. The protein localises to the cytoskeleton. In terms of biological role, promotes the formation of filopodia. May activate CDC42, a member of the Ras-like family of Rho- and Rac proteins, by exchanging bound GDP for free GTP. Plays a role in regulating the actin cytoskeleton and cell shape. This chain is FYVE, RhoGEF and PH domain-containing protein 3 (Fgd3), found in Mus musculus (Mouse).